The following is a 656-amino-acid chain: Threonine--tRNA ligase (656 aa).

Residues 1-64 form the TGS domain; the sequence is MAEAASLTFP…ERSGKIEIIT (64 aa). Residues 246–548 are catalytic; the sequence is DHRRLGREMD…LIENYAGHFP (303 aa). Positions 342, 393, and 525 each coordinate Zn(2+).

This sequence belongs to the class-II aminoacyl-tRNA synthetase family. Homodimer. The cofactor is Zn(2+).

It is found in the cytoplasm. It catalyses the reaction tRNA(Thr) + L-threonine + ATP = L-threonyl-tRNA(Thr) + AMP + diphosphate + H(+). In terms of biological role, catalyzes the attachment of threonine to tRNA(Thr) in a two-step reaction: L-threonine is first activated by ATP to form Thr-AMP and then transferred to the acceptor end of tRNA(Thr). Also edits incorrectly charged L-seryl-tRNA(Thr). This is Threonine--tRNA ligase from Chelativorans sp. (strain BNC1).